Consider the following 1080-residue polypeptide: MVAPVPPGAPRPNSQQNSGPPNFYPGSQGNSNALADNMQNLSLNRPPPMMPGSGPRPPPPFGQSPQPFPQQSPSYGAPQRGPSPMSRPGPPAGMARPGGPPPVSQPAGFQSNVPLNRPTGPPSRQPSFGSRPSMPGGPVAQPAASSSGFPAFGPSGSVAAGPPPGSRPMAFGSPPPVGSGMSMPPSGMIGGPVSNGHQMVGSGGFPRGTQFPGAAVTTPQAPYVRPPSAPYARTPPQPLGSHSLSGNPPLTPFTAPSMPPPATFPGAPHGRPAVSGLPYGPPSAQVAPPLGFPGQMQPPRYGMGPLPNQSMTNIPTAMGQPGATVPGPSRIDPNQIPRPGSSSSPTVFETRQSNQANPPPPATSDYVVRDTGNCSPRYMRCTINQIPCTVDLLSTSGMQLALMVQPLALSHPSEEPIQVVDFGEGGPVRCSRCKGYINPFMKFIDQGRKFICNFCGYTDETPRDYHCNLGPDGRRRDVDERPELCRGTVEFVATKEYMVRDPMPAVYFFLIDVSMNAIQTGATAAACNAIQQVLSDLPEGPRTFVGIATFDSTIHFYNLKRALQQPLMLIVPDVQDVYTPLETDVVVQLSECRQHLELLLDSIPTMFQESKIPESAFGAAVKAAFLAMKSKGGKLMVFQSILCSVGVGALSSREAEGRANMSAGEKEAHKLLQPADKTLKTMAIEFAEYQVCVDIFITTQAYVDMASISVIPRTTGGQVYCYYPFSALSDPPKLYNDLKWNITRPQGFEAVMRVRCSQGIQVQEYSGNFCKRIPTDIDLPAHDDKLQDGAECAFQCALLYTTIYGERRIRVTTLSLSCTNMLSNLFRAADLDSQFACMLKQAANEIPSKALPLVKEQATNSCINALYAYRKFCATVTSSGQLILPEALKLFPLYTLALTKSVGLRTDGRIDDRSFWINYVSSLSTPLAIPLVYPRMISVHDLDVKDTEGSVLPPPIPLSSEHISNEGVYFLENGEDGLLFVGESVDSDILQKLFAVSSAAEIPNQFVLQQYDNQLSKKFNDAVNEIRRQRCSYLRIKLCKKGEPSGMLFLSYMVEDRTASGPSYVEFLVQVHRQIQLKMN.

Residues 1–10 are compositionally biased toward pro residues; the sequence is MVAPVPPGAP. Disordered stretches follow at residues 1 to 189, 201 to 220, and 316 to 367; these read MVAP…SGMI, GSGG…TTPQ, and TAMG…SDYV. Polar residues predominate over residues 12 to 43; it reads PNSQQNSGPPNFYPGSQGNSNALADNMQNLSL. Positions 45–70 are enriched in pro residues; it reads RPPPMMPGSGPRPPPPFGQSPQPFPQ. 3 stretches are compositionally biased toward low complexity: residues 71-84, 142-160, and 178-189; these read QSPS…GPSP, PAAS…SVAA, and GSGMSMPPSGMI. The span at 340 to 356 shows a compositional bias: polar residues; it reads GSSSSPTVFETRQSNQA. Zn(2+) is bound by residues C430, C433, C452, and C455. The zinc finger-like stretch occupies residues 430–455; the sequence is CSRCKGYINPFMKFIDQGRKFICNFC.

Belongs to the SEC23/SEC24 family. SEC24 subfamily. Component of the coat protein complex II (COPII), composed of at least five proteins: the Sec23/24 complex, the Sec13/31 complex and Sar1. In terms of tissue distribution, mainly expressed at low levels in pollen, leaves, roots and stems.

The protein resides in the cytoplasmic vesicle. It localises to the COPII-coated vesicle membrane. It is found in the endoplasmic reticulum membrane. Its subcellular location is the golgi apparatus membrane. Functionally, component of the coat protein complex II (COPII), that covers ER-derived vesicles involved in transport from the endoplasmic reticulum to the Golgi apparatus. COPII is composed of at least five proteins: the SEC23/24 complex, the SEC13/31 complex, and the protein SAR1. Acts in the cytoplasm to promote the transport of secretory, plasma membrane, and vacuolar proteins from the endoplasmic reticulum to the Golgi complex. The sequence is that of Protein transport protein SEC24 C from Arabidopsis thaliana (Mouse-ear cress).